Consider the following 182-residue polypeptide: Adenine phosphoribosyltransferase (182 aa).

The protein belongs to the purine/pyrimidine phosphoribosyltransferase family. As to quaternary structure, homodimer.

Its subcellular location is the cytoplasm. It carries out the reaction AMP + diphosphate = 5-phospho-alpha-D-ribose 1-diphosphate + adenine. The protein operates within purine metabolism; AMP biosynthesis via salvage pathway; AMP from adenine: step 1/1. Functionally, catalyzes a salvage reaction resulting in the formation of AMP, that is energically less costly than de novo synthesis. The sequence is that of Adenine phosphoribosyltransferase from Streptomyces galbus.